Consider the following 252-residue polypeptide: Imidazole glycerol phosphate synthase subunit HisF (252 aa).

Catalysis depends on residues Asp11 and Asp130.

This sequence belongs to the HisA/HisF family. In terms of assembly, heterodimer of HisH and HisF.

The protein resides in the cytoplasm. It carries out the reaction 5-[(5-phospho-1-deoxy-D-ribulos-1-ylimino)methylamino]-1-(5-phospho-beta-D-ribosyl)imidazole-4-carboxamide + L-glutamine = D-erythro-1-(imidazol-4-yl)glycerol 3-phosphate + 5-amino-1-(5-phospho-beta-D-ribosyl)imidazole-4-carboxamide + L-glutamate + H(+). The protein operates within amino-acid biosynthesis; L-histidine biosynthesis; L-histidine from 5-phospho-alpha-D-ribose 1-diphosphate: step 5/9. In terms of biological role, IGPS catalyzes the conversion of PRFAR and glutamine to IGP, AICAR and glutamate. The HisF subunit catalyzes the cyclization activity that produces IGP and AICAR from PRFAR using the ammonia provided by the HisH subunit. This is Imidazole glycerol phosphate synthase subunit HisF from Bacillus cereus (strain AH820).